The chain runs to 530 residues: Per os infectivity factor 1 (530 aa).

The signal sequence occupies residues Met1–Ala15.

Forms the PIF complex together with PIF2 and PIF3. The complex also interacts with per os infectivity factor PIF0.

The protein localises to the virion membrane. In terms of biological role, per os infectivity factor that mediates the specific binding of occluded virions (ODV) to the host midgut target cells. The protein is Per os infectivity factor 1 of Autographa californica nuclear polyhedrosis virus (AcMNPV).